The chain runs to 85 residues: UPF0386 protein HNE_3437 (85 aa).

Belongs to the UPF0386 family.

The sequence is that of UPF0386 protein HNE_3437 from Hyphomonas neptunium (strain ATCC 15444).